The primary structure comprises 306 residues: ORF-B protein (306 aa).

A run of 3 helical transmembrane segments spans residues Met-92–Ile-112, Leu-120–Trp-140, and Val-161–Ser-181.

In terms of assembly, interacts with host RACK1.

Its subcellular location is the host cytoplasm. The protein resides in the host cell membrane. The polypeptide is ORF-B protein (Sander vitreus (Walleye)).